The primary structure comprises 558 residues: Glypican-1 (558 aa).

A signal peptide spans 1–23 (MELRARGWWLLCAAAALVACARG). Intrachain disulfides connect Cys32-Cys68, Cys62-Cys256, Cys69-Cys259, Cys191-Cys343, Cys246-Cys279, Cys268-Cys415, and Cys272-Cys401. 2 N-linked (GlcNAc...) asparagine glycosylation sites follow: Asn79 and Asn116. The disordered stretch occupies residues 341–374 (QGCGNPKVNPQGPGPEEKRRRGKLAPRERPPSGT). Over residues 355–370 (PEEKRRRGKLAPRERP) the composition is skewed to basic and acidic residues. 3 O-linked (Xyl...) (heparan sulfate) serine glycosylation sites follow: Ser486, Ser488, and Ser490. A disordered region spans residues 505–534 (RKSSSSRTPLTHALPGLSEQEGQKTSAASC). Ser530 is lipidated: GPI-anchor amidated serine. The propeptide at 531-558 (AASCPQPPTFLLPLLLFLALTVARPRWR) is removed in mature form.

The protein belongs to the glypican family. Post-translationally, S-nitrosylated in a Cu(2+)-dependent manner. Nitric acid (NO) is released from the nitrosylated cysteines by ascorbate or by some other reducing agent, in a Cu(2+) or Zn(2+) dependent manner. This free nitric oxide is then capable of cleaving the heparan sulfate side chains. N- and O-glycosylated. N-glycosylation is mainly of the complex type containing sialic acid. O-glycosylated with heparan sulfate. The heparan sulfate chains can be cleaved either by the action of heparanase or, degraded by a deaminative process that uses nitric oxide (NO) released from the S-nitrosylated cysteines. This process is triggered by ascorbate, or by some other reducing agent, in a Cu(2+)- or Zn(2+) dependent manner. Cu(2+) ions are provided by ceruloproteins such as APP, PRNP or CP which associate with GCP1 in intracellular compartments or lipid rafts. In terms of processing, this cell-associated glypican is further processed to give rise to a medium-released species.

Its subcellular location is the cell membrane. It is found in the endosome. The protein resides in the secreted. The protein localises to the extracellular space. Functionally, cell surface proteoglycan that bears heparan sulfate. Binds, via the heparan sulfate side chains, alpha-4 (V) collagen and participates in Schwann cell myelination. May act as a catalyst in increasing the rate of conversion of prion protein PRPN(C) to PRNP(Sc) via associating (via the heparan sulfate side chains) with both forms of PRPN, targeting them to lipid rafts and facilitating their interaction. Required for proper skeletal muscle differentiation by sequestering FGF2 in lipid rafts preventing its binding to receptors (FGFRs) and inhibiting the FGF-mediated signaling. This chain is Glypican-1 (GPC1), found in Homo sapiens (Human).